The primary structure comprises 351 residues: Phospho-N-acetylmuramoyl-pentapeptide-transferase (351 aa).

A run of 10 helical transmembrane segments spans residues 17 to 37 (MAYA…YIIL), 62 to 82 (GIPT…LVFW), 85 to 105 (ILNV…FLGF), 130 to 150 (IIFS…HVSV), 158 to 178 (SFQI…LISA), 190 to 210 (GLAI…AYLT), 230 to 250 (LVIF…FNAY), 254 to 274 (IMMG…AALI), 279 to 299 (ILFS…IIQV), and 328 to 348 (QVVI…LSTI).

This sequence belongs to the glycosyltransferase 4 family. MraY subfamily. Requires Mg(2+) as cofactor.

The protein resides in the cell inner membrane. It carries out the reaction UDP-N-acetyl-alpha-D-muramoyl-L-alanyl-gamma-D-glutamyl-meso-2,6-diaminopimeloyl-D-alanyl-D-alanine + di-trans,octa-cis-undecaprenyl phosphate = di-trans,octa-cis-undecaprenyl diphospho-N-acetyl-alpha-D-muramoyl-L-alanyl-D-glutamyl-meso-2,6-diaminopimeloyl-D-alanyl-D-alanine + UMP. It functions in the pathway cell wall biogenesis; peptidoglycan biosynthesis. Its function is as follows. Catalyzes the initial step of the lipid cycle reactions in the biosynthesis of the cell wall peptidoglycan: transfers peptidoglycan precursor phospho-MurNAc-pentapeptide from UDP-MurNAc-pentapeptide onto the lipid carrier undecaprenyl phosphate, yielding undecaprenyl-pyrophosphoryl-MurNAc-pentapeptide, known as lipid I. The polypeptide is Phospho-N-acetylmuramoyl-pentapeptide-transferase (Borreliella burgdorferi (strain ATCC 35210 / DSM 4680 / CIP 102532 / B31) (Borrelia burgdorferi)).